The sequence spans 116 residues: Large ribosomal subunit protein eL18 (116 aa).

Belongs to the eukaryotic ribosomal protein eL18 family. In terms of assembly, part of the 50S ribosomal subunit. Interacts weakly with proteins L4 and L15. Has been cross-linked to L4.

Stabilizes the tertiary rRNA structure within the 23S rRNA domain (domain II) to which it binds. In Haloarcula marismortui (strain ATCC 43049 / DSM 3752 / JCM 8966 / VKM B-1809) (Halobacterium marismortui), this protein is Large ribosomal subunit protein eL18 (rpl18e).